The primary structure comprises 378 residues: Queuine tRNA-ribosyltransferase (378 aa).

The active-site Proton acceptor is the D91. Substrate contacts are provided by residues 91–95 (DSGGF), D145, Q189, and G216. An RNA binding region spans residues 247-253 (GVGKPED). D266 functions as the Nucleophile in the catalytic mechanism. The segment at 271 to 275 (TRNAR) is RNA binding; important for wobble base 34 recognition. Zn(2+) is bound by residues C304, C306, C309, and H335.

Belongs to the queuine tRNA-ribosyltransferase family. In terms of assembly, homodimer. Within each dimer, one monomer is responsible for RNA recognition and catalysis, while the other monomer binds to the replacement base PreQ1. Zn(2+) serves as cofactor.

The enzyme catalyses 7-aminomethyl-7-carbaguanine + guanosine(34) in tRNA = 7-aminomethyl-7-carbaguanosine(34) in tRNA + guanine. It participates in tRNA modification; tRNA-queuosine biosynthesis. In terms of biological role, catalyzes the base-exchange of a guanine (G) residue with the queuine precursor 7-aminomethyl-7-deazaguanine (PreQ1) at position 34 (anticodon wobble position) in tRNAs with GU(N) anticodons (tRNA-Asp, -Asn, -His and -Tyr). Catalysis occurs through a double-displacement mechanism. The nucleophile active site attacks the C1' of nucleotide 34 to detach the guanine base from the RNA, forming a covalent enzyme-RNA intermediate. The proton acceptor active site deprotonates the incoming PreQ1, allowing a nucleophilic attack on the C1' of the ribose to form the product. After dissociation, two additional enzymatic reactions on the tRNA convert PreQ1 to queuine (Q), resulting in the hypermodified nucleoside queuosine (7-(((4,5-cis-dihydroxy-2-cyclopenten-1-yl)amino)methyl)-7-deazaguanosine). This chain is Queuine tRNA-ribosyltransferase, found in Vibrio atlanticus (strain LGP32) (Vibrio splendidus (strain Mel32)).